Consider the following 338-residue polypeptide: Phosphate transport system permease protein PstC 1 (338 aa).

8 helical membrane passes run 19–39 (GGIGAVIPLLALVLVLVVLVI), 93–113 (TSAIALIIAVPVSVGAALVIV), 123–143 (AVGIVLELLAGIPSVVVGLWG), 144–164 (AMTFGPFIAHHIAPVIAHNAP), 181–201 (GMLVSGLVLAVMVVPIIATTT), 232–252 (LPWVSSGIVGAVVLGLGRALG), 254–274 (TMAVAMVSGAVLGAMPANIYA), and 295–315 (TNFAVKTLAEVGLVLMVITLL). The 234-residue stretch at 87 to 320 (IVGTLATSAI…VITLLTNVAA (234 aa)) folds into the ABC transmembrane type-1 domain.

The protein belongs to the binding-protein-dependent transport system permease family. CysTW subfamily.

It localises to the cell membrane. Functionally, part of the binding-protein-dependent transport system for phosphate; probably responsible for the translocation of the substrate across the membrane. The protein is Phosphate transport system permease protein PstC 1 (pstC1) of Mycobacterium bovis (strain ATCC BAA-935 / AF2122/97).